A 437-amino-acid polypeptide reads, in one-letter code: Mannan endo-1,4-beta-mannosidase A (437 aa).

Residues 1-19 (MMMLSKSLLSAATAASALA) form the signal peptide. Residues 20 to 27 (AVLQPVPR) constitute a propeptide that is removed on maturation. Residues 28-376 (ASSFVTISGT…VDAINGGTTT (349 aa)) are catalytic. A disulfide bridge links C53 with C56. N-linked (GlcNAc...) asparagine glycosylation is found at N157 and N184. E196 (proton donor/acceptor) is an active-site residue. 196–198 (EPR) contacts substrate. An intrachain disulfide couples C199 to C202. Substrate is bound by residues E232 and W274. The N-linked (GlcNAc...) asparagine glycan is linked to N277. C292 and C299 form a disulfide bridge. The active-site Nucleophile is E303. Cysteines 311 and 361 form a disulfide. N355 is a glycosylation site (N-linked (GlcNAc...) asparagine). The tract at residues 372–399 (GGTTTPPPVSSTTTTSSRTSSTPPPPGG) is disordered. A linker region spans residues 377 to 399 (PPPVSSTTTTSSRTSSTPPPPGG). Low complexity predominate over residues 381–392 (SSTTTTSSRTSS). One can recognise a CBM1 domain in the interval 400–435 (SCSPLYGQCGGSGYTGPTCCAQGTCIYSNYWYSQCL).

This sequence belongs to the glycosyl hydrolase 5 (cellulase A) family. As to quaternary structure, monomer.

It localises to the secreted. It catalyses the reaction Random hydrolysis of (1-&gt;4)-beta-D-mannosidic linkages in mannans, galactomannans and glucomannans.. Endo-1,4-mannanase that catalyzes the random hydrolysis of (1-&gt;4)-beta-D-mannosidic linkages in mannans and heteromannans. It is a crucial enzyme for depolymerization of seed galactomannans and wood galactoglucomannans. Active against locust bean gum and ivory nut mannan, releasing mainly tri- and disaccharides. Also has transglycosylation activity. Transglycosylation of two mannotrioses into a mannohexaose is the major transglycosylation route. In Hypocrea jecorina (strain ATCC 56765 / BCRC 32924 / NRRL 11460 / Rut C-30) (Trichoderma reesei), this protein is Mannan endo-1,4-beta-mannosidase A.